We begin with the raw amino-acid sequence, 1755 residues long: Transposon Ty1-JR2 Gag-Pol polyprotein (1755 aa).

A compositionally biased stretch (low complexity) spans 1–16; sequence MESQQLSQHSHISHGS. Disordered stretches follow at residues 1 to 93, 126 to 173, and 352 to 421; these read MESQ…MMTQ, PQSQ…RPPP, and GSRN…SKST. 3 stretches are compositionally biased toward polar residues: residues 48 to 60, 71 to 93, and 127 to 152; these read TKAN…TPAS, SPQT…MMTQ, and QSQF…GNTF. Residues 153–165 are compositionally biased toward low complexity; sequence TDSSSADSDMTST. Positions 299 to 401 are RNA-binding; that stretch reads NNGIHINNKV…NSKSKTARAH (103 aa). Residues 402-418 are compositionally biased toward low complexity; sequence NVSTSNNSPSTDNDSIS. Serine 416 is subject to Phosphoserine. The active-site For protease activity; shared with dimeric partner is the aspartate 461. Positions 583–640 are integrase-type zinc finger-like; that stretch reads NVHTSESTRKYPYPFIHRMLAHANAQTIRYSLKNNTITYFNESDVDWSSAIDYQCPDC. The 176-residue stretch at 660–835 folds into the Integrase catalytic domain; sequence NSYEPFQYLH…AGLDISTLLP (176 aa). Aspartate 671 and aspartate 736 together coordinate Mg(2+). Disordered stretches follow at residues 956–1087, 1092–1111, and 1130–1186; these read SKAV…ETEK, RSPS…NIVP, and DLPL…EDNE. Over residues 960-969 the composition is skewed to low complexity; sequence SPTDSTPPST. The span at 1005 to 1015 shows a compositional bias: polar residues; sequence STPQISNIEST. Positions 1038–1053 are enriched in basic and acidic residues; it reads ESSHASKSKDFRHSDS. 2 stretches are compositionally biased toward polar residues: residues 1054-1082 and 1101-1111; these read YSEN…QISD and PENNSSHNIVP. The Bipartite nuclear localization signal signature appears at 1178–1212; the sequence is KKRSLEDNETEIKVSRDTWNTKNMRSLEPPRSKKR. In terms of domain architecture, Reverse transcriptase Ty1/copia-type spans 1338–1476; the sequence is NNYYITQLDI…DILGLEIKYQ (139 aa). Mg(2+) contacts are provided by aspartate 1346, aspartate 1427, aspartate 1428, aspartate 1610, glutamate 1652, and aspartate 1685. The RNase H Ty1/copia-type domain maps to 1610 to 1752; it reads DASYGNQPYY…IKTFKLLTNK (143 aa).

As to quaternary structure, the capsid protein forms a homotrimer, from which the VLPs are assembled. The protease is a homodimer, whose active site consists of two apposed aspartic acid residues. Post-translationally, initially, virus-like particles (VLPs) are composed of the structural unprocessed proteins Gag and Gag-Pol, and also contain the host initiator methionine tRNA (tRNA(i)-Met) which serves as a primer for minus-strand DNA synthesis, and a dimer of genomic Ty RNA. Processing of the polyproteins occurs within the particle and proceeds by an ordered pathway, called maturation. First, the protease (PR) is released by autocatalytic cleavage of the Gag-Pol polyprotein yielding capsid protein p45 and a Pol-p154 precursor protein. This cleavage is a prerequisite for subsequent processing of Pol-p154 at the remaining sites to release the mature structural and catalytic proteins. Maturation takes place prior to the RT reaction and is required to produce transposition-competent VLPs.

The protein localises to the cytoplasm. It localises to the nucleus. It catalyses the reaction DNA(n) + a 2'-deoxyribonucleoside 5'-triphosphate = DNA(n+1) + diphosphate. The enzyme catalyses Endonucleolytic cleavage to 5'-phosphomonoester.. Its function is as follows. Capsid protein (CA) is the structural component of the virus-like particle (VLP), forming the shell that encapsulates the retrotransposons dimeric RNA genome. The particles are assembled from trimer-clustered units and there are holes in the capsid shells that allow for the diffusion of macromolecules. CA also has nucleocapsid-like chaperone activity, promoting primer tRNA(i)-Met annealing to the multipartite primer-binding site (PBS), dimerization of Ty1 RNA and initiation of reverse transcription. In terms of biological role, the aspartyl protease (PR) mediates the proteolytic cleavages of the Gag and Gag-Pol polyproteins after assembly of the VLP. Functionally, reverse transcriptase/ribonuclease H (RT) is a multifunctional enzyme that catalyzes the conversion of the retro-elements RNA genome into dsDNA within the VLP. The enzyme displays a DNA polymerase activity that can copy either DNA or RNA templates, and a ribonuclease H (RNase H) activity that cleaves the RNA strand of RNA-DNA heteroduplexes during plus-strand synthesis and hydrolyzes RNA primers. The conversion leads to a linear dsDNA copy of the retrotransposon that includes long terminal repeats (LTRs) at both ends. Integrase (IN) targets the VLP to the nucleus, where a subparticle preintegration complex (PIC) containing at least integrase and the newly synthesized dsDNA copy of the retrotransposon must transit the nuclear membrane. Once in the nucleus, integrase performs the integration of the dsDNA into the host genome. The protein is Transposon Ty1-JR2 Gag-Pol polyprotein (TY1B-JR2) of Saccharomyces cerevisiae (strain ATCC 204508 / S288c) (Baker's yeast).